The primary structure comprises 240 residues: NKG2-E type II integral membrane protein (240 aa).

Residues 1–12 show a composition bias toward polar residues; it reads MSKQRGTFSEVS. The segment at 1–31 is disordered; it reads MSKQRGTFSEVSLAQDPKWQQRKPKGNKSSI. Residues 1 to 70 are Cytoplasmic-facing; it reads MSKQRGTFSE…CQGLLPPPEK (70 aa). The chain crosses the membrane as a helical; Signal-anchor for type II membrane protein span at residues 71–93; it reads LTAEVLGIICIVLMATVLKTIVL. The Extracellular segment spans residues 94–240; it reads IPFLEQNNSS…IMLTRLVLNS (147 aa). An N-linked (GlcNAc...) asparagine glycan is attached at Asn100. The region spanning 116 to 230 is the C-type lectin domain; that stretch reads HCPEEWITYS…GSSRIIRRGF (115 aa). A disulfide bridge connects residues Cys117 and Cys128. Residues Asn149 and Asn179 are each glycosylated (N-linked (GlcNAc...) asparagine). A disulfide bridge links Cys207 with Cys220.

In terms of assembly, can form disulfide-bonded heterodimer with CD94. Natural killer cells.

It is found in the membrane. Its function is as follows. Plays a role as a receptor for the recognition of MHC class I HLA-E molecules by NK cells and some cytotoxic T-cells. In Homo sapiens (Human), this protein is NKG2-E type II integral membrane protein (KLRC3).